Consider the following 170-residue polypeptide: Tubulin polymerization-promoting protein family member 2 (170 aa).

A disordered region spans residues 127-147 (TGTHKERFDESGKGKGIAGRE). Residues 129–139 (THKERFDESGK) are compositionally biased toward basic and acidic residues.

The protein belongs to the TPPP family.

The protein localises to the cytoplasm. Its subcellular location is the cytosol. The protein resides in the cell projection. It localises to the cilium. It is found in the flagellum. In terms of biological role, probable regulator of microtubule dynamics required for sperm motility. In contrast to other members of the family, has no microtubule bundling activity. This is Tubulin polymerization-promoting protein family member 2 (TPPP2) from Macaca fascicularis (Crab-eating macaque).